A 386-amino-acid chain; its full sequence is Succinate--CoA ligase [ADP-forming] subunit beta (386 aa).

In terms of domain architecture, ATP-grasp spans lysine 9–arginine 244. ATP contacts are provided by residues lysine 46, glycine 53–glycine 55, glutamate 99, threonine 102, and glutamate 107. Mg(2+) contacts are provided by asparagine 199 and aspartate 213. Substrate contacts are provided by residues asparagine 264 and glycine 321–valine 323.

This sequence belongs to the succinate/malate CoA ligase beta subunit family. As to quaternary structure, heterotetramer of two alpha and two beta subunits. Requires Mg(2+) as cofactor.

The catalysed reaction is succinate + ATP + CoA = succinyl-CoA + ADP + phosphate. It carries out the reaction GTP + succinate + CoA = succinyl-CoA + GDP + phosphate. It functions in the pathway carbohydrate metabolism; tricarboxylic acid cycle; succinate from succinyl-CoA (ligase route): step 1/1. Its function is as follows. Succinyl-CoA synthetase functions in the citric acid cycle (TCA), coupling the hydrolysis of succinyl-CoA to the synthesis of either ATP or GTP and thus represents the only step of substrate-level phosphorylation in the TCA. The beta subunit provides nucleotide specificity of the enzyme and binds the substrate succinate, while the binding sites for coenzyme A and phosphate are found in the alpha subunit. This is Succinate--CoA ligase [ADP-forming] subunit beta from Thioalkalivibrio sulfidiphilus (strain HL-EbGR7).